The following is a 561-amino-acid chain: MMTAESRETTGLSPQAAQEKDGIVIVKVEEEDEEDHMWGQDSSLQETPPPDPEVFRQRFRRFCYQNTFGPREALNRLKELCHQWLRPEVNSKEQILELLVLEQFLSILPKELQVWLQEYRPDSGEEAVTLLEDLELDLSGQQVPGQVHGPEMLARGVVPLDPVQESSSFDHHETAQSHFKHSSRKPRLLSRALPATHVPAPHHEGNPRDQAMASALLTADSQAMVKIEDMAVSLILEEWGCQNLARRNLNRDSRQMNLGNVFSQGSENRNGNESTSKAEVKEDSTSHGEIAGRFQKEFGEKREQQGRVVERQQKNPEEKTGKEKKEPGPPTAKEKKPSTGERGPREKGKGLGRSFSLSANFNNTPEEAPSGAKTHRCDECGKCFTRSSSLIRHKIIHTGEKPYECNECGKAFSLNSNLVLHQRIHTGEKPHECNECGKAFSHSSNLILHQRIHSGEKPYECNECGKAFSQSSDLTKHQRIHTGEKPYECSECGKAFNRNSYLILHRRIHTREKPYKCTKCGKAFTRSSTLTLHHRIHARERTSEYSPASLDAFGAFLKSCV.

Positions 1 to 51 (MMTAESRETTGLSPQAAQEKDGIVIVKVEEEDEEDHMWGQDSSLQETPPPD) are disordered. Ser13 carries the post-translational modification Phosphoserine. A Glycyl lysine isopeptide (Lys-Gly) (interchain with G-Cter in SUMO2) cross-link involves residue Lys27. In terms of domain architecture, SCAN box spans 56-138 (RQRFRRFCYQ…TLLEDLELDL (83 aa)). The disordered stretch occupies residues 163–187 (VQESSSFDHHETAQSHFKHSSRKPR). The span at 178-187 (HFKHSSRKPR) shows a compositional bias: basic residues. Glycyl lysine isopeptide (Lys-Gly) (interchain with G-Cter in SUMO2) cross-links involve residues Lys180 and Lys226. The region spanning 225-304 (VKIEDMAVSL…QKEFGEKREQ (80 aa)) is the KRAB domain. Positions 260-275 (NVFSQGSENRNGNEST) are enriched in polar residues. The tract at residues 260-372 (NVFSQGSENR…NTPEEAPSGA (113 aa)) is disordered. 2 stretches are compositionally biased toward basic and acidic residues: residues 276–286 (SKAEVKEDSTS) and 294–349 (FQKE…EKGK). Residues Lys277, Lys296, Lys301, and Lys336 each participate in a glycyl lysine isopeptide (Lys-Gly) (interchain with G-Cter in SUMO2) cross-link. Residues 355-365 (FSLSANFNNTP) are compositionally biased toward polar residues. Residue Lys373 forms a Glycyl lysine isopeptide (Lys-Gly) (interchain with G-Cter in SUMO2) linkage. 6 C2H2-type zinc fingers span residues 375–397 (HRCD…KIIH), 403–425 (YECN…QRIH), 431–453 (HECN…QRIH), 459–481 (YECN…QRIH), 487–509 (YECS…RRIH), and 515–537 (YKCT…HRIH). Glycyl lysine isopeptide (Lys-Gly) (interchain with G-Cter in SUMO2) cross-links involve residues Lys410, Lys438, and Lys476. Lys558 participates in a covalent cross-link: Glycyl lysine isopeptide (Lys-Gly) (interchain with G-Cter in SUMO2).

It belongs to the krueppel C2H2-type zinc-finger protein family.

The protein resides in the nucleus. Its function is as follows. May be involved in transcriptional regulation. The sequence is that of Zinc finger protein with KRAB and SCAN domains 1 (Zkscan1) from Mus musculus (Mouse).